We begin with the raw amino-acid sequence, 383 residues long: Lipid-A-disaccharide synthase (383 aa).

Belongs to the LpxB family.

The enzyme catalyses a lipid X + a UDP-2-N,3-O-bis[(3R)-3-hydroxyacyl]-alpha-D-glucosamine = a lipid A disaccharide + UDP + H(+). The protein operates within bacterial outer membrane biogenesis; LPS lipid A biosynthesis. Functionally, condensation of UDP-2,3-diacylglucosamine and 2,3-diacylglucosamine-1-phosphate to form lipid A disaccharide, a precursor of lipid A, a phosphorylated glycolipid that anchors the lipopolysaccharide to the outer membrane of the cell. The chain is Lipid-A-disaccharide synthase from Anaeromyxobacter dehalogenans (strain 2CP-1 / ATCC BAA-258).